A 125-amino-acid polypeptide reads, in one-letter code: Small ribosomal subunit protein uS13 (125 aa).

The protein belongs to the universal ribosomal protein uS13 family. Part of the 30S ribosomal subunit. Forms a loose heterodimer with protein S19. Forms two bridges to the 50S subunit in the 70S ribosome.

Its function is as follows. Located at the top of the head of the 30S subunit, it contacts several helices of the 16S rRNA. In the 70S ribosome it contacts the 23S rRNA (bridge B1a) and protein L5 of the 50S subunit (bridge B1b), connecting the 2 subunits; these bridges are implicated in subunit movement. Contacts the tRNAs in the A and P-sites. This Orientia tsutsugamushi (strain Ikeda) (Rickettsia tsutsugamushi) protein is Small ribosomal subunit protein uS13.